Reading from the N-terminus, the 304-residue chain is E3 ubiquitin-protein ligase RNF115 (304 aa).

Ala2 is subject to N-acetylalanine. The tract at residues 95-138 is disordered; the sequence is PLDQDNRANERGHQTHTDFWGARPPRLPLGRRYRSRGSSRPDRS. The segment covering 98-110 has biased composition (basic and acidic residues); it reads QDNRANERGHQTH. 2 positions are modified to phosphoserine; by PKB/AKT1: Ser132 and Ser133. The RING-type zinc-finger motif lies at 228–269; sequence CPVCKEDYTVEEEVRQLPCNHFFHSSCIVPWLELHDTCPVCR. A disordered region spans residues 272–304; the sequence is LNGEDSTRQSQSTEASASNRFSNDSQLHDRWTF. The segment covering 279-296 has biased composition (polar residues); sequence RQSQSTEASASNRFSNDS.

In terms of assembly, interacts with RAB7A. Interacts with EGFR and FLT3. Interacts with BST2. Interacts with STX17. Interacts with YWHAE. Post-translationally, phosphorylated by AKT1, allowing association with the 14-3-3 chaperones that facilitates associating with TLRs. RING-type zinc finger-dependent and E2-dependent autoubiquitination. In terms of processing, deubiquitinated by USP9X; antogonizing its autoubiquitination and subsequent proteasomal degradation. Expressed at extremely low levels in normal breast, prostate, lung, colon. Higher levels of expression are detected in heart, skeletal muscle, testis as well as in breast and prostate cancer cells.

The protein resides in the cytoplasm. The protein localises to the nucleus. Its subcellular location is the endoplasmic reticulum. It is found in the golgi apparatus. It catalyses the reaction S-ubiquitinyl-[E2 ubiquitin-conjugating enzyme]-L-cysteine + [acceptor protein]-L-lysine = [E2 ubiquitin-conjugating enzyme]-L-cysteine + N(6)-ubiquitinyl-[acceptor protein]-L-lysine.. Its pathway is protein modification; protein ubiquitination. E3 ubiquitin-protein ligase that catalyzes the 'Lys-48'- and/or 'Lys-63'-linked polyubiquitination of various substrates and thereby plays a role in a number of signaling pathways including autophagy, innate immunity, cell proliferation and cell death. Plays a role in the endosomal trafficking and degradation of membrane receptors including EGFR, FLT3, MET and CXCR4 through their polyubiquitination. Participates together with BST2 in antiviral immunity by facilitating the internalization of HIV-1 virions into intracellular vesicles leading to their lysosomal degradation. Also possesses an antiviral activity independently of BST2 by promoting retroviral GAG proteins ubiquitination, redistribution to endo-lysosomal compartments and, ultimately, lysosomal degradation. Catalyzes distinct types of ubiquitination on MAVS and STING1 at different phases of viral infection to promote innate antiviral response. Mediates the 'Lys-48'-linked ubiquitination of MAVS leading to its proteasomal degradation and ubiquitinates STING1 via 'Lys-63'-linked polyubiquitination, critical for its oligomerization and the subsequent recruitment of TBK1. Plays a positive role in the autophagosome-lysosome fusion by interacting with STX17 and enhancing its stability without affecting 'Lys-48'- or 'Lys-63'-linked polyubiquitination levels, which in turn promotes autophagosome maturation. Negatively regulates TLR-induced expression of proinflammatory cytokines by catalyzing 'Lys-11'-linked ubiquitination of RAB1A and RAB13 to inhibit post-ER trafficking of TLRs to the Golgi by RAB1A and subsequently from the Golgi apparatus to the cell surface by RAB13. This is E3 ubiquitin-protein ligase RNF115 from Homo sapiens (Human).